The following is a 295-amino-acid chain: Phosphatidylserine decarboxylase proenzyme (295 aa).

Catalysis depends on charge relay system; for autoendoproteolytic cleavage activity residues Asp-90, His-147, and Ser-254. Catalysis depends on Ser-254, which acts as the Schiff-base intermediate with substrate; via pyruvic acid; for decarboxylase activity. Position 254 is a pyruvic acid (Ser); by autocatalysis (Ser-254).

Belongs to the phosphatidylserine decarboxylase family. PSD-B subfamily. Prokaryotic type I sub-subfamily. As to quaternary structure, heterodimer of a large membrane-associated beta subunit and a small pyruvoyl-containing alpha subunit. Pyruvate is required as a cofactor. Post-translationally, is synthesized initially as an inactive proenzyme. Formation of the active enzyme involves a self-maturation process in which the active site pyruvoyl group is generated from an internal serine residue via an autocatalytic post-translational modification. Two non-identical subunits are generated from the proenzyme in this reaction, and the pyruvate is formed at the N-terminus of the alpha chain, which is derived from the carboxyl end of the proenzyme. The autoendoproteolytic cleavage occurs by a canonical serine protease mechanism, in which the side chain hydroxyl group of the serine supplies its oxygen atom to form the C-terminus of the beta chain, while the remainder of the serine residue undergoes an oxidative deamination to produce ammonia and the pyruvoyl prosthetic group on the alpha chain. During this reaction, the Ser that is part of the protease active site of the proenzyme becomes the pyruvoyl prosthetic group, which constitutes an essential element of the active site of the mature decarboxylase.

It is found in the cell membrane. It carries out the reaction a 1,2-diacyl-sn-glycero-3-phospho-L-serine + H(+) = a 1,2-diacyl-sn-glycero-3-phosphoethanolamine + CO2. The protein operates within phospholipid metabolism; phosphatidylethanolamine biosynthesis; phosphatidylethanolamine from CDP-diacylglycerol: step 2/2. In terms of biological role, catalyzes the formation of phosphatidylethanolamine (PtdEtn) from phosphatidylserine (PtdSer). This Sodalis glossinidius (strain morsitans) protein is Phosphatidylserine decarboxylase proenzyme.